We begin with the raw amino-acid sequence, 248 residues long: Enolase-phosphatase E1 (248 aa).

2 residues coordinate Mg(2+): Asp14 and Glu16. Residues 145-146 and Lys179 contribute to the substrate site; that span reads SS. Mg(2+) is bound at residue Asp204.

Belongs to the HAD-like hydrolase superfamily. MasA/MtnC family. In terms of assembly, monomer. Mg(2+) serves as cofactor.

Its subcellular location is the cytoplasm. It is found in the nucleus. It carries out the reaction 5-methylsulfanyl-2,3-dioxopentyl phosphate + H2O = 1,2-dihydroxy-5-(methylsulfanyl)pent-1-en-3-one + phosphate. It participates in amino-acid biosynthesis; L-methionine biosynthesis via salvage pathway; L-methionine from S-methyl-5-thio-alpha-D-ribose 1-phosphate: step 3/6. Its pathway is amino-acid biosynthesis; L-methionine biosynthesis via salvage pathway; L-methionine from S-methyl-5-thio-alpha-D-ribose 1-phosphate: step 4/6. Functionally, bifunctional enzyme that catalyzes the enolization of 2,3-diketo-5-methylthiopentyl-1-phosphate (DK-MTP-1-P) into the intermediate 2-hydroxy-3-keto-5-methylthiopentenyl-1-phosphate (HK-MTPenyl-1-P), which is then dephosphorylated to form the acireductone 1,2-dihydroxy-3-keto-5-methylthiopentene (DHK-MTPene). In Caenorhabditis elegans, this protein is Enolase-phosphatase E1.